We begin with the raw amino-acid sequence, 142 residues long: FAD synthase (142 aa).

Residues 9–10 (VF), 14–17 (HLGH), aspartate 93, and tyrosine 120 contribute to the ATP site.

It belongs to the archaeal FAD synthase family. Homodimer. Requires a divalent metal cation as cofactor.

It carries out the reaction FMN + ATP + H(+) = FAD + diphosphate. The protein operates within cofactor biosynthesis; FAD biosynthesis; FAD from FMN: step 1/1. Functionally, catalyzes the transfer of the AMP portion of ATP to flavin mononucleotide (FMN) to produce flavin adenine dinucleotide (FAD) coenzyme. The chain is FAD synthase from Thermoplasma acidophilum (strain ATCC 25905 / DSM 1728 / JCM 9062 / NBRC 15155 / AMRC-C165).